We begin with the raw amino-acid sequence, 439 residues long: Proline--tRNA ligase (439 aa).

It belongs to the class-II aminoacyl-tRNA synthetase family. ProS type 2 subfamily. As to quaternary structure, homodimer.

It localises to the cytoplasm. It carries out the reaction tRNA(Pro) + L-proline + ATP = L-prolyl-tRNA(Pro) + AMP + diphosphate. Functionally, catalyzes the attachment of proline to tRNA(Pro) in a two-step reaction: proline is first activated by ATP to form Pro-AMP and then transferred to the acceptor end of tRNA(Pro). The chain is Proline--tRNA ligase from Parvibaculum lavamentivorans (strain DS-1 / DSM 13023 / NCIMB 13966).